Here is a 163-residue protein sequence, read N- to C-terminus: K88 minor fimbrial subunit FaeF (163 aa).

The signal sequence occupies residues Met-1–Ala-22.

It is found in the fimbrium. K88 minor fimbrial subunit, plays an essential role in the biogenesis of the K88 fimbriae. required at some step in the initiation and/or elongation of the K88 fimbriae. The sequence is that of K88 minor fimbrial subunit FaeF (faeF) from Escherichia coli.